The sequence spans 532 residues: MADGGSGMCWCLRRCGKNQEVLLLPDGEEVTMGRGLGVTYQLKPTLCPLMISRTHCLFKQNARDEWTVTDNKSLNGVWRNKERLEPHKAYTLSEGTLIQLGVPPPNMESAEFEYILVREHLDKVSGSLIRPLPGKTKATRTKRKFPSEDADASGNEGPSNFSIPKFCRVSRDGEDSAKSLRTSHKQPKASGVEPELNDSVETDTVSPTQQQCCRSTLQLSRVRETMEEIRRLNVQIQEKQIKMQEKLNHPQESQLGSNSYLVVQKELQALRNQLSNEQEQHLQSVKELKEIFQEEQQSMGSQKQAEEEHLKEQLAQALQEHTQLMQELNRNKNDFEQIIQAKNKELQETKEEKEKVCAQKEEVLNHMNDVLDNELQCIICSEHFIEAVTLNCAHSFCSYCIKSWRKRKEECPICRQEILSETRSLVLDNCIDSMVDKLSPEMKNRRAALILERKEMVQAEESNPVLVVSDSSSFLSDTFYISSSSSDSDELGSDFWMVNEEEEYEESLFGCGTDELDSSDFESDDDDSFLIV.

The region spanning 30-84 (VTMGRGLGVTYQLKPTLCPLMISRTHCLFKQNARDEWTVTDNKSLNGVWRNKERL) is the FHA domain. The disordered stretch occupies residues 127–209 (SLIRPLPGKT…VETDTVSPTQ (83 aa)). Positions 169-178 (VSRDGEDSAK) are enriched in basic and acidic residues. Residues 377–415 (CIICSEHFIEAVTLNCAHSFCSYCIKSWRKRKEECPICR) form an RING-type zinc finger.

The protein belongs to the RNF8 family. As to quaternary structure, homodimer. Forms a E2-E3 ubiquitin ligase complex composed of the rnf8 homodimer and a E2 heterodimer of ube2n and ube2v2.

The protein localises to the nucleus. It catalyses the reaction S-ubiquitinyl-[E2 ubiquitin-conjugating enzyme]-L-cysteine + [acceptor protein]-L-lysine = [E2 ubiquitin-conjugating enzyme]-L-cysteine + N(6)-ubiquitinyl-[acceptor protein]-L-lysine.. It functions in the pathway protein modification; protein ubiquitination. In terms of biological role, E3 ubiquitin-protein ligase that plays a key role in DNA damage signaling via 2 distinct roles: by mediating the 'Lys-63'-linked ubiquitination of histones H2A and H2AX and promoting the recruitment of DNA repair proteins at double-strand breaks (DSBs) sites, and by catalyzing 'Lys-48'-linked ubiquitination to remove target proteins from DNA damage sites. Following DNA DSBs, it is recruited to the sites of damage by ATM-phosphorylated mdc1 and catalyzes the 'Lys-63'-linked ubiquitination of histones H2A and H2AX, thereby promoting the formation of tp53bp1 and brca1 ionizing radiation-induced foci (IRIF). H2A ubiquitination also mediates the ATM-dependent transcriptional silencing at regions flanking DSBs in cis, a mechanism to avoid collision between transcription and repair intermediates. Also catalyzes the formation of 'Lys-48'-linked polyubiquitin chains, leading to degradation of substrate proteins. In addition to its function in damage signaling, also plays a role in higher-order chromatin structure by mediating extensive chromatin decondensation. The sequence is that of E3 ubiquitin-protein ligase rnf8-B from Xenopus laevis (African clawed frog).